A 444-amino-acid polypeptide reads, in one-letter code: L-cysteine:1D-myo-inositol 2-amino-2-deoxy-alpha-D-glucopyranoside ligase (444 aa).

C66 lines the Zn(2+) pocket. L-cysteinyl-5'-AMP is bound by residues 66–69 (CGIT), T81, and 104–106 (NVT). A 'HIGH' region motif is present at residues 68–78 (ITPYDATHLGH). Positions 206–211 (EHGGDP) match the 'ERGGDP' region motif. L-cysteinyl-5'-AMP is bound at residue W246. C250 lines the Zn(2+) pocket. L-cysteinyl-5'-AMP is bound at residue 268-270 (GSD). Residue H275 participates in Zn(2+) binding. V302 serves as a coordination point for L-cysteinyl-5'-AMP. Residues 308–312 (KMSKS) carry the 'KMSKS' region motif.

This sequence belongs to the class-I aminoacyl-tRNA synthetase family. MshC subfamily. As to quaternary structure, monomer. Requires Zn(2+) as cofactor.

It carries out the reaction 1D-myo-inositol 2-amino-2-deoxy-alpha-D-glucopyranoside + L-cysteine + ATP = 1D-myo-inositol 2-(L-cysteinylamino)-2-deoxy-alpha-D-glucopyranoside + AMP + diphosphate + H(+). Its function is as follows. Catalyzes the ATP-dependent condensation of GlcN-Ins and L-cysteine to form L-Cys-GlcN-Ins. This is L-cysteine:1D-myo-inositol 2-amino-2-deoxy-alpha-D-glucopyranoside ligase from Parafrankia sp. (strain EAN1pec).